A 156-amino-acid polypeptide reads, in one-letter code: MASGLGDLSVGVSSLPMRELAWRRVADDSHDLWCCCMDWKAHVEYAHPASELRPGSGGWPEHAEAQWRQQVHAAHDVWCNCGDWQGHALRSRSRTAESGRSSSSSSVSVLSDGDQQPWWRRLRVKRPKFPSWARRWTQRHDSEERASQQAKNDSTS.

2 disordered regions span residues 90–114 and 133–156; these read RSRSRTAESGRSSSSSSVSVLSDGD and ARRWTQRHDSEERASQQAKNDSTS. Positions 96-111 are enriched in low complexity; that stretch reads AESGRSSSSSSVSVLS. Positions 147–156 are enriched in polar residues; the sequence is SQQAKNDSTS.

This chain is Protein US1 (US1), found in Homo sapiens (Human).